A 557-amino-acid chain; its full sequence is D-arabinono-1,4-lactone oxidase (557 aa).

Residues 25–209 (FLCKPQAIFQ…THVTLRTCPK (185 aa)) form the FAD-binding PCMH-type domain. FAD contacts are provided by residues 58–61 (VGSG), 62–63 (HS), 144–148 (ISTGT), Ile-199, and 543–546 (LSGK). Position 62 is a pros-8alpha-FAD histidine (His-62).

Belongs to the oxygen-dependent FAD-linked oxidoreductase family. It depends on FAD as a cofactor.

The enzyme catalyses D-arabinono-1,4-lactone + O2 = dehydro-D-arabinono-1,4-lactone + H2O2 + H(+). The catalysed reaction is L-galactono-1,4-lactone + O2 = L-ascorbate + H2O2 + H(+). It catalyses the reaction L-gulono-1,4-lactone + O2 = L-ascorbate + H2O2 + H(+). It carries out the reaction L-xylono-1,4-lactone + O2 = dehydro-L-arabinono-1,4-lactone + H2O2 + H(+). The protein operates within cofactor biosynthesis; D-erythroascorbate biosynthesis; dehydro-D-arabinono-1,4-lactone from D-arabinose: step 2/2. D-arabinono-1,4-lactone oxidase that catalyzes the final step of biosynthesis of D-erythroascorbic acid, an important antioxidant and one of the virulence factors enhancing the pathogenicity. Is also able to oxidize L-galactono-1,4-lactone, L-xylono-1,4-lactone and L-gulono-1,4-lactone. The polypeptide is D-arabinono-1,4-lactone oxidase (Candida albicans (strain SC5314 / ATCC MYA-2876) (Yeast)).